The following is a 37-amino-acid chain: Alpha-conotoxin TxID (37 aa).

The propeptide occupies 1 to 21 (FDGRNAAGNDKMSALMALTTR). 2 disulfide bridges follow: Cys-23/Cys-29 and Cys-24/Cys-36. Cysteine amide is present on Cys-36.

It belongs to the conotoxin A superfamily. Post-translationally, unmodified Met-32 is essential for toxin binding to rat alpha-3-beta-4/CHRNA3-CHRNB4 nAChR. An oxidation of this methionine provokes a 13.3-fold decrease in inhibitory potency (IC(50)=245 nM instead of 18 nM). Owing to its potent activity, derivatives of this toxin have a potential in the development of a novel drug. Unfortunately, the oxidation of the methionine is readily to happen during toxin synthesis and oxidation steps as well as under oxidative environment in vivo, which should still be considered to find a solution to this major drawback. In terms of tissue distribution, expressed by the venom duct.

The protein localises to the secreted. Its function is as follows. Alpha-conotoxins act on postsynaptic membranes, they bind to the nicotinic acetylcholine receptors (nAChR) and thus inhibit them. This toxin inhibits alpha-3-beta-4/CHRNA3-CHRNB4 (IC(50)=3.6-18.38 nM), alpha-6/alpha-3-beta-4 (CHRNA6/CHRNA3-CHRNB4) (IC(50)=33.9-94.1 nM), and alpha-2-beta-4/CHRNA2-CHRNB4 (IC(50)=4550 nM) nAChRs. The toxin competes with agonists in the orthosteric binding site of alpha-3-beta-4/CHRNA3-CHRNB4 and alpha-6-beta-4/CHRNA6-CHRNB4. The polypeptide is Alpha-conotoxin TxID (Conus textile (Cloth-of-gold cone)).